Consider the following 148-residue polypeptide: Protein TIFY 5B (148 aa).

The Tify domain maps to 54–89 (PKQESQILTIFYNGHMCVSSDLTHLEANAILSLASR).

Belongs to the TIFY/JAZ family. In terms of processing, ubiquitinated. Targeted for degradation by the SCF(COI1) E3 ubiquitin ligase-proteasome pathway during jasmonate signaling.

It localises to the nucleus. Functionally, repressor of jasmonate responses. This is Protein TIFY 5B (TIFY 5B) from Arabidopsis thaliana (Mouse-ear cress).